The chain runs to 660 residues: Bifunctional polymyxin resistance protein ArnA (660 aa).

The tract at residues 1-304 (MKAVIFAYHD…TLGLVAGARL (304 aa)) is formyltransferase ArnAFT. His104 serves as the catalytic Proton donor; for formyltransferase activity. (6R)-10-formyltetrahydrofolate-binding positions include Arg114 and 136 to 140 (VKRAD). The tract at residues 314–660 (RRIRVLILGV…RSVDVAERAS (347 aa)) is dehydrogenase ArnADH. NAD(+) is bound by residues Asp347 and 368–369 (DI). UDP-alpha-D-glucuronate is bound by residues Ala393, Tyr398, and 432–433 (TS). Glu434 (proton acceptor; for decarboxylase activity) is an active-site residue. UDP-alpha-D-glucuronate-binding positions include Arg460, Asn492, 526–535 (KLIDGGQQKR), and Tyr613. The active-site Proton donor; for decarboxylase activity is the Arg619.

In the N-terminal section; belongs to the Fmt family. UDP-L-Ara4N formyltransferase subfamily. It in the C-terminal section; belongs to the NAD(P)-dependent epimerase/dehydratase family. UDP-glucuronic acid decarboxylase subfamily. As to quaternary structure, homohexamer, formed by a dimer of trimers.

The enzyme catalyses UDP-alpha-D-glucuronate + NAD(+) = UDP-beta-L-threo-pentopyranos-4-ulose + CO2 + NADH. It carries out the reaction UDP-4-amino-4-deoxy-beta-L-arabinose + (6R)-10-formyltetrahydrofolate = UDP-4-deoxy-4-formamido-beta-L-arabinose + (6S)-5,6,7,8-tetrahydrofolate + H(+). It participates in nucleotide-sugar biosynthesis; UDP-4-deoxy-4-formamido-beta-L-arabinose biosynthesis; UDP-4-deoxy-4-formamido-beta-L-arabinose from UDP-alpha-D-glucuronate: step 1/3. Its pathway is nucleotide-sugar biosynthesis; UDP-4-deoxy-4-formamido-beta-L-arabinose biosynthesis; UDP-4-deoxy-4-formamido-beta-L-arabinose from UDP-alpha-D-glucuronate: step 3/3. It functions in the pathway bacterial outer membrane biogenesis; lipopolysaccharide biosynthesis. Bifunctional enzyme that catalyzes the oxidative decarboxylation of UDP-glucuronic acid (UDP-GlcUA) to UDP-4-keto-arabinose (UDP-Ara4O) and the addition of a formyl group to UDP-4-amino-4-deoxy-L-arabinose (UDP-L-Ara4N) to form UDP-L-4-formamido-arabinose (UDP-L-Ara4FN). The modified arabinose is attached to lipid A and is required for resistance to polymyxin and cationic antimicrobial peptides. The polypeptide is Bifunctional polymyxin resistance protein ArnA (Salmonella heidelberg (strain SL476)).